Reading from the N-terminus, the 993-residue chain is Signal peptide, CUB and EGF-like domain-containing protein 3 (993 aa).

Residues 1 to 20 (MGSGRVPGLCLLLLLVHARA) form the signal peptide. One can recognise an EGF-like 1; calcium-binding domain in the interval 29–69 (DVDECVEGTDNCHIDAICQNTPRSYKCICKSGYTGDGKHCK). Intrachain disulfides connect cysteine 33-cysteine 46, cysteine 40-cysteine 55, cysteine 57-cysteine 68, cysteine 74-cysteine 86, cysteine 82-cysteine 95, cysteine 97-cysteine 110, cysteine 116-cysteine 127, cysteine 123-cysteine 136, cysteine 161-cysteine 172, cysteine 168-cysteine 182, cysteine 184-cysteine 197, cysteine 201-cysteine 212, cysteine 208-cysteine 221, cysteine 223-cysteine 236, cysteine 240-cysteine 251, cysteine 247-cysteine 260, cysteine 262-cysteine 275, cysteine 281-cysteine 292, cysteine 288-cysteine 301, cysteine 303-cysteine 316, cysteine 322-cysteine 332, cysteine 328-cysteine 341, cysteine 343-cysteine 355, cysteine 361-cysteine 372, cysteine 368-cysteine 381, and cysteine 383-cysteine 397. The 42-residue stretch at 70-111 (DVDECEREDNAGCVHDCVNIPGNYRCTCYDGFHLAHDGHNCL) folds into the EGF-like 2; calcium-binding domain. The 37-residue stretch at 112–148 (DVDECAEGNGGCQQSCVNMMGSYECHCRDGFFLSDNQ) folds into the EGF-like 3; calcium-binding domain. 3 EGF-like domains span residues 157–198 (EGMN…RDCK), 199–237 (LTCN…KTCI), and 238–276 (ETCA…KTCK). The region spanning 277–317 (DIDECRLNNGGCDHICRNTVGSFECSCKKGYKLLINERSCQ) is the EGF-like 7; calcium-binding domain. The region spanning 318 to 356 (DIDECSFDRTCDHMCVNTPGSFQCLCHRGYLLYGVTHCG) is the EGF-like 8; calcium-binding domain. One can recognise an EGF-like 9; calcium-binding domain in the interval 357 to 398 (DVDECSINKGGCRFGCINTPGSYQCTCPAGQGRLHWNGKDCT). N-linked (GlcNAc...) asparagine glycosylation is found at asparagine 417, asparagine 464, asparagine 685, asparagine 756, and asparagine 785. 2 disulfides stabilise this stretch: cysteine 804-cysteine 830 and cysteine 857-cysteine 878. Residues 804–916 (CGGELGEFTG…RGFQIPYVTY (113 aa)) enclose the CUB domain.

Forms homooligomers. Forms heterooligomers with SCUBE1 and SCUBE2. Interacts with TGFBR2 through the CUB domain; this interaction does not affect TGFB1-binding to TGFBR2. Interacts with BMP2, BMP4 and BMP7; the interaction is mediated by the CUB domain. Interacts with BMPR1A, BMPR1B and BMPR2; the interaction with BMPR1A and BMPR1B is BMP2- and BMP4-dependent. Post-translationally, N-glycosylated. In terms of processing, proteolytic cleavage produces a CUB-containing C-terminal fragment that retains the ability to bind to TGFBR2. This reaction is catalyzed in vitro by MMP2 and, to a lesser extent, by MMP9. As to expression, highly expressed in femur and humerus with little or no expression in non-bone tissues.

The protein resides in the secreted. The protein localises to the cell surface. In terms of biological role, is a positive regulator of the BMP signaling pathway, required for proper chondrogenesis, osteogenesis and skeletal development. It acts as a coreceptor for BMP ligands, particularly BMP2 and BMP4, facilitating their interactions with BMP type I receptors. It is required for ligand-induced recruitment of BMP receptors to lipid rafts. Binds to TGFBR2 and activates TGFB signaling. This is Signal peptide, CUB and EGF-like domain-containing protein 3 from Mus musculus (Mouse).